The chain runs to 903 residues: MPRSASQPPDDALQGNLFGAPEPAAPSATATASEPETASHDLSDDELGADAAARPRTRQATASEGSSEAPAANDSEPSRDEPAWGHHSQLDPLQLTPMLRHYVELKAAHPERVLLYRLGDFFECFFEDAIELSRVLELTLTGKEGGKAIGRVPMAGIPHHAAERYCAELIKQGYSVALCDQLETTPTKGALLKRDITRVLTPGTVLEEGMLSARRNNWLAAVVVEPAQGKQPLRWGLASADVSTGEVQVMQREDSSALHQQLAQQEASELLWAAALDTERPAWCPERLRLTPMASTPFSPVEAERTLQQHYGLSSLDGLGLPEHPLALQALGGLLGYLQDTQPLEEDSRIPLEVPAIVHRGDALVLDAQTRRNLELTATQRDNQLQGSLLWAIDRTLTAMGGRCLRRWLEAPLMDRQAIQQRQDLVSSLVGERSLRLAIRQLLRPMGDLERLAGRAGAGHAGARDLVAIADGLERLPQLTARLKSAISTGPEWLQQLLSPDPALAELARTIRHKLVEAPPLSLSEGDLIHDGVDPLLDGLRNQLDDQDAWLSHQEQQERQRCGISTLKLQHHRTFGYFLAVSKAKATAVPEHWIRRQTLANEERFITPDLKEREGRIFQLRARACQREYELFCQLREQVGAMAAPIRQAARAVAALDALTGLGDVAASGGYCAPTITDGRGLQLEDSRHPVVEQRLVETAFTPNDVQLGEGTDLVVLTGPNASGKSCYLRQIGLIQLMAQIGSWVPARSATVGIADRIFTRVGAVDDLAAGQSTFMVEMAETANILHHASDRSLVLLDEIGRGTATFDGLSIAWAVSEHLAGDLGSRTVFATHYHELNNLAAERDNVANFQVLVEETGEDLVFLHQVQAGGASRSYGIEAARLAGVPKPVVQRARQVLDQLTA.

The segment at 1–89 (MPRSASQPPD…DEPAWGHHSQ (89 aa)) is disordered. Low complexity-rich tracts occupy residues 20-36 (APEP…SEPE) and 49-62 (ADAA…QATA). ATP is bound at residue 719–726 (GPNASGKS).

Belongs to the DNA mismatch repair MutS family.

Functionally, this protein is involved in the repair of mismatches in DNA. It is possible that it carries out the mismatch recognition step. This protein has a weak ATPase activity. This chain is DNA mismatch repair protein MutS, found in Synechococcus sp. (strain CC9605).